We begin with the raw amino-acid sequence, 131 residues long: L-ectoine synthase (131 aa).

It belongs to the ectoine synthase family.

The catalysed reaction is (2S)-4-acetamido-2-aminobutanoate = L-ectoine + H2O. The protein operates within amine and polyamine biosynthesis; ectoine biosynthesis; L-ectoine from L-aspartate 4-semialdehyde: step 3/3. Functionally, catalyzes the circularization of gamma-N-acetyl-alpha,gamma-diaminobutyric acid (ADABA) to ectoine (1,4,5,6-tetrahydro-2-methyl-4-pyrimidine carboxylic acid), which is an excellent osmoprotectant. The polypeptide is L-ectoine synthase (Bordetella bronchiseptica (strain ATCC BAA-588 / NCTC 13252 / RB50) (Alcaligenes bronchisepticus)).